The chain runs to 150 residues: Large ribosomal subunit protein uL13 (150 aa).

A disordered region spans residues 128–150; sequence GSDHPHSAQEPKILSLNSESVTK.

It belongs to the universal ribosomal protein uL13 family. In terms of assembly, part of the 50S ribosomal subunit.

Its function is as follows. This protein is one of the early assembly proteins of the 50S ribosomal subunit, although it is not seen to bind rRNA by itself. It is important during the early stages of 50S assembly. This is Large ribosomal subunit protein uL13 from Prochlorococcus marinus (strain NATL1A).